The primary structure comprises 124 residues: Small ribosomal subunit protein uS13 (124 aa).

Positions Lys-93–Ala-117 are enriched in basic residues. Positions Lys-93–Lys-124 are disordered.

This sequence belongs to the universal ribosomal protein uS13 family. As to quaternary structure, part of the 30S ribosomal subunit. Forms a loose heterodimer with protein S19. Forms two bridges to the 50S subunit in the 70S ribosome.

Its function is as follows. Located at the top of the head of the 30S subunit, it contacts several helices of the 16S rRNA. In the 70S ribosome it contacts the 23S rRNA (bridge B1a) and protein L5 of the 50S subunit (bridge B1b), connecting the 2 subunits; these bridges are implicated in subunit movement. Contacts the tRNAs in the A and P-sites. The chain is Small ribosomal subunit protein uS13 from Mycoplasma genitalium (strain ATCC 33530 / DSM 19775 / NCTC 10195 / G37) (Mycoplasmoides genitalium).